The primary structure comprises 108 residues: uncharacterized protein (108 aa).

This is an uncharacterized protein from Acidianus sp. F28 (AFV-2).